Consider the following 443-residue polypeptide: MQRRDDPAARMSRSSGRSGSMDPSGAHPSVRQTPSRQPPLPHRSRGGGGGSRGGARASPATQPPPLLPPSATGPDATVGGPAPTPLLPPSATASVKMEPENKYLPELMAEKDSLDPSFTHAMQLLTAEIEKIQKGDSKKDDEENYLDLFSHKNMKLKERVLIPVKQYPKFNFVGKILGPQGNTIKRLQEETGAKISVLGKGSMRDKAKEEELRKGGDPKYAHLNMDLHVFIEVFGPPCEAYALMAHAMEEVKKFLVPDMMDDICQEQFLELSYLNGVPEPSRGRGVPVRGRGAAPPPPPVPRGRGVGPPRGALVRGTPVRGAITRGATVTRGVPPPPTVRGAPAPRARTAGIQRIPLPPPPAPETYEEYGYDDTYAEQSYEGYEGYYSQSQGDSEYYDYGHGEVQDSYEAYGQDDWNGTRPSLKAPPARPVKGAYREHPYGRY.

Residues 1-96 (MQRRDDPAAR…LPPSATASVK (96 aa)) are disordered. Over residues 10–21 (RMSRSSGRSGSM) the composition is skewed to low complexity. 3 positions are modified to phosphoserine: Ser-18, Ser-20, and Ser-29. At Thr-33 the chain carries Phosphothreonine. Arg-45 carries the post-translational modification Asymmetric dimethylarginine; by PRMT1. Residue Arg-52 is modified to Asymmetric dimethylarginine; partial; by PRMT1. A Phosphoserine modification is found at Ser-58. The residue at position 84 (Thr-84) is a Phosphothreonine; by MAPK1. Residues Lys-96 and Lys-102 each participate in a glycyl lysine isopeptide (Lys-Gly) (interchain with G-Cter in SUMO2) cross-link. Positions 100-260 (ENKYLPELMA…VKKFLVPDMM (161 aa)) are involved in homodimerization. Ser-113 carries the phosphoserine modification. Lys-139 participates in a covalent cross-link: Glycyl lysine isopeptide (Lys-Gly) (interchain with G-Cter in SUMO2). Ser-150 is modified (phosphoserine). Residues 171 to 197 (NFVGKILGPQGNTIKRLQEETGAKISV) form the KH domain. Lys-175 carries the N6-acetyllysine; alternate modification. Lys-175 is covalently cross-linked (Glycyl lysine isopeptide (Lys-Gly) (interchain with G-Cter in SUMO2); alternate). Thr-183 is subject to Phosphothreonine. Residues 280–293 (PSRGRGVPVRGRGA) are compositionally biased toward low complexity. Residues 280–316 (PSRGRGVPVRGRGAAPPPPPVPRGRGVGPPRGALVRG) are disordered. Arg-282, Arg-284, and Arg-291 each carry omega-N-methylarginine. Arg-304 is modified (asymmetric dimethylarginine; by PRMT1). Residues 307–316 (GPPRGALVRG) are compositionally biased toward low complexity. 4 positions are modified to omega-N-methylarginine; by PRMT1: Arg-310, Arg-315, Arg-320, and Arg-325. A Dimethylated arginine; in A2780 ovarian carcinoma cell line modification is found at Arg-320. Residues 327–346 (ATVTRGVPPPPTVRGAPAPR) form a disordered region. Dimethylated arginine; in A2780 ovarian carcinoma cell line occurs at positions 331 and 340. Asymmetric dimethylarginine; alternate is present on Arg-331. Arg-331 carries the post-translational modification Omega-N-methylarginine; by PRMT1; alternate. Omega-N-methylarginine; by PRMT1 is present on Arg-340. The segment at 351 to 443 (GIQRIPLPPP…AYREHPYGRY (93 aa)) is interaction with HNRNPA1. At Tyr-387 the chain carries Phosphotyrosine. Phosphoserine is present on Ser-390. Residues 400 to 420 (GHGEVQDSYEAYGQDDWNGTR) form an interaction with ZBTB7A region. The tract at residues 411-443 (YGQDDWNGTRPSLKAPPARPVKGAYREHPYGRY) is disordered. A Glycyl lysine isopeptide (Lys-Gly) (interchain with G-Cter in SUMO2) cross-link involves residue Lys-432. Positions 434–443 (AYREHPYGRY) are enriched in basic and acidic residues. A phosphotyrosine; by PTK6 mark is found at Tyr-435, Tyr-440, and Tyr-443.

The protein belongs to the KHDRBS family. In terms of assembly, self-associates to form homooligomers when bound to RNA, oligomerization appears to be limited when binding to proteins; dimerization increases RNA affinity. Forms a trimeric complex in the nucleus consisting of BANP, HDAC6 and KHDRBS1/SAM68; HDAC6 keeps KHDRBS1 in a deacetylated state which inhibits the inclusion of CD44 alternate exons. The complex is disrupted by MAPK1/MAPK3-mediated phosphorylation of BANP which results in BANP export to the cytoplasm. This facilitates acetylation of KHDRBS1 and CD44 variant exon inclusion. Interacts with KHDRBS3/SLIM-2. Interacts with KHDRBS2/SLIM-1; heterooligomer formation of KHDRBS family proteins may modulate RNA substrate specificity. Interacts with RASA1, LCK, FYN, PTPN6, PLCG1, GRB2, CBL, JAK3, PIK3R, STAT3, APC, HNRNPA1. Interacts with PTK6 (via SH3 and SH2 domains). Forms a complex with ILF2, ILF3, YLPM1, RBMX, NCOA5 and PPP1CA. Does not interact with TPR. Interacts with PRMT1. Binds WBP4/FBP21 (via WW domains), FNBP4/FBP30 (via WW domains). Interacts (via Arg/Gly-rich-flanked Pro-rich regions) with FYN (via the SH3 domain). Interacts with the non-receptor tyrosine kinase SRMS; the interaction leads to phosphorylation of KHDRBS1. Interacts with ZBTB7A; negatively regulates KHDRBS1 splicing activity toward BCL2L1. In terms of processing, tyrosine phosphorylated by several non-receptor tyrosine kinases including LCK, FYN and JAK3. Also tyrosine phosphorylated by the non-receptor tyrosine kinase SRMS in an EGF-dependent manner. Negatively correlates with ability to bind RNA but required for many interactions with proteins. Phosphorylation by PTK6 negatively regulates its RNA binding ability. Phosphorylation by PTK6 at Tyr-440 dictates the nuclear localization of KHDRBS1. Phosphorylation at Tyr-387 disrupts interaction with APC. Phosphorylation at tyrosine residues by FYN inverts activity on modulation of BCL2L1 alternative splicing. Acetylated. Positively correlates with ability to bind RNA. Deacetylated by HDAC6; this regulates alternative splicing by inhibiting the inclusion of CD44 alternate exons. Post-translationally, arginine methylation is required for nuclear localization. Also can affect interaction with other proteins. Inhibits interaction with Src-like SH3 domains, but not interaction with WW domains of WBP4/FBP21 and FNBP4/FBP30. As to expression, ubiquitously expressed in all tissue examined. Isoform 1 is expressed at lower levels in brain, skeletal muscle, and liver whereas isoform 3 is intensified in skeletal muscle and in liver.

It localises to the nucleus. The protein resides in the cytoplasm. The protein localises to the membrane. Functionally, recruited and tyrosine phosphorylated by several receptor systems, for example the T-cell, leptin and insulin receptors. Once phosphorylated, functions as an adapter protein in signal transduction cascades by binding to SH2 and SH3 domain-containing proteins. Role in G2-M progression in the cell cycle. Represses CBP-dependent transcriptional activation apparently by competing with other nuclear factors for binding to CBP. Also acts as a putative regulator of mRNA stability and/or translation rates and mediates mRNA nuclear export. Positively regulates the association of constitutive transport element (CTE)-containing mRNA with large polyribosomes and translation initiation. According to some authors, is not involved in the nucleocytoplasmic export of unspliced (CTE)-containing RNA species according to. RNA-binding protein that plays a role in the regulation of alternative splicing and influences mRNA splice site selection and exon inclusion. Binds to RNA containing 5'-[AU]UAA-3' as a bipartite motif spaced by more than 15 nucleotides. Binds poly(A). Can regulate CD44 alternative splicing in a Ras pathway-dependent manner. In cooperation with HNRNPA1 modulates alternative splicing of BCL2L1 by promoting splicing toward isoform Bcl-X(S), and of SMN1. Can regulate alternative splicing of NRXN1 and NRXN3 in the laminin G-like domain 6 containing the evolutionary conserved neurexin alternative spliced segment 4 (AS4) involved in neurexin selective targeting to postsynaptic partners. In a neuronal activity-dependent manner cooperates synergistically with KHDRBS2/SLIM-1 in regulation of NRXN1 exon skipping at AS4. The cooperation with KHDRBS2/SLIM-1 is antagonistic for regulation of NXRN3 alternative splicing at AS4. Its function is as follows. Isoform 3, which is expressed in growth-arrested cells only, inhibits S phase. The polypeptide is KH domain-containing, RNA-binding, signal transduction-associated protein 1 (Homo sapiens (Human)).